A 262-amino-acid polypeptide reads, in one-letter code: Acetaldehyde dehydrogenase 7 (262 aa).

Position 10-13 (10-13 (SGNI)) interacts with NAD(+). Residue cysteine 128 is the Acyl-thioester intermediate of the active site. 159–167 (SAGPGTRAN) contacts NAD(+).

This sequence belongs to the acetaldehyde dehydrogenase family.

The enzyme catalyses acetaldehyde + NAD(+) + CoA = acetyl-CoA + NADH + H(+). The polypeptide is Acetaldehyde dehydrogenase 7 (Rhodococcus jostii (strain RHA1)).